The primary structure comprises 149 residues: Urease accessory protein UreE (149 aa).

The protein belongs to the UreE family.

Its subcellular location is the cytoplasm. Involved in urease metallocenter assembly. Binds nickel. Probably functions as a nickel donor during metallocenter assembly. In Corynebacterium efficiens (strain DSM 44549 / YS-314 / AJ 12310 / JCM 11189 / NBRC 100395), this protein is Urease accessory protein UreE.